Consider the following 1264-residue polypeptide: Valine--tRNA ligase (1264 aa).

At Ser2 the chain carries N-acetylserine. One can recognise a GST C-terminal domain in the interval 89 to 219; that stretch reads GSRAAVLVQQ…YSGARSVTQQ (131 aa). Residues 218 to 230 show a composition bias toward polar residues; the sequence is QQPGSEITAPQKT. Residues 218–296 are disordered; sequence QQPGSEITAP…GEKKDVSGTM (79 aa). Composition is skewed to basic and acidic residues over residues 234–248 and 260–275; these read LKKE…EKFQ and HGEK…KRDP. Positions 344–354 match the 'HIGH' region motif; that stretch reads PNVTGSLHLGH. Residues Ser437 and Ser527 each carry the phosphoserine modification. N6-acetyllysine is present on Lys645. The short motif at 862–866 is the 'KMSKS' region element; it reads KMSKS. Position 865 (Lys865) interacts with ATP.

This sequence belongs to the class-I aminoacyl-tRNA synthetase family. As to quaternary structure, forms high-molecular-mass aggregates with elongation factor 1.

The enzyme catalyses tRNA(Val) + L-valine + ATP = L-valyl-tRNA(Val) + AMP + diphosphate. With respect to regulation, can be regulated by protein kinase C-dependent phosphorylation. This is Valine--tRNA ligase (Vars1) from Rattus norvegicus (Rat).